An 809-amino-acid chain; its full sequence is F-BAR domain only protein 2 (809 aa).

Residues 3–250 (MAHFVENFWG…NMANTTIESL (248 aa)) form the F-BAR domain. Residues 3–274 (MAHFVENFWG…PGLIEFEECD (272 aa)) form a mediates dimerization and binding to membranes enriched in Pi(4,5)-P2 and induces their tubulation region. Positions 87–156 (HLDLVRKLQE…CVEQERLKKE (70 aa)) form a coiled coil. Residue Lys297 forms a Glycyl lysine isopeptide (Lys-Gly) (interchain with G-Cter in SUMO2) linkage. The segment at 301–352 (DAESVECPDADSLNIPDVDEEGFSIKPEANQNDTKENHFYSSSDSDSEDEEP) is disordered. At Ser312 the chain carries Phosphoserine. Thr385 bears the Phosphothreonine mark. Phosphoserine is present on residues Ser387, Ser394, Ser402, and Ser403. Residues 390–416 (VSRHSPVQMNRNSSNEELTKSKPSSLP) show a composition bias toward polar residues. Disordered regions lie at residues 390–422 (VSRH…KGTN) and 435–536 (LESS…PVSL). Residues 435–456 (LESSSAPLTSSSSARPTTPLSL) are compositionally biased toward low complexity. Residues Ser487, Ser492, Ser495, Ser507, Ser509, Ser510, and Ser532 each carry the phosphoserine modification. Over residues 501 to 520 (PLARAESSSSISSSASLSAA) the composition is skewed to low complexity. The segment at 520–809 (ANTPTVGVSR…FATGRYLADC (290 aa)) is mediates interaction with DAB2, EPS15, EPS15R and ITSN1. The MHD domain occupies 541–808 (TLPVAIALTE…RFATGRYLAD (268 aa)).

It belongs to the FCHO family. Homodimer; disulfide-linked. May form homotetramer. Interacts with AP2A1. Interacts with EPS15, EPS15R, ITSN1 and ITSN2; recruit those scaffolding proteins which in turn may interact with the adaptor protein complex AP-2 at the plasma membrane. Interacts with DAB2 (via DPF motifs); mediates LDL receptor/LDLR endocytosis. Post-translationally, ubiquitinated. Mainly undergoes monoubiquitination but also polyubiquitination. In terms of tissue distribution, ubiquitously expressed (at protein level).

Its subcellular location is the membrane. The protein localises to the clathrin-coated pit. In terms of biological role, functions in an early step of clathrin-mediated endocytosis. Has both a membrane binding/bending activity and the ability to recruit proteins essential to the formation of functional clathrin-coated pits. Has a lipid-binding activity with a preference for membranes enriched in phosphatidylserine and phosphoinositides (Pi(4,5) biphosphate) like the plasma membrane. Its membrane-bending activity might be important for the subsequent action of clathrin and adaptors in the formation of clathrin-coated vesicles. Involved in adaptor protein complex AP-2-dependent endocytosis of the transferrin receptor, it also functions in the AP-2-independent endocytosis of the LDL receptor. In Mus musculus (Mouse), this protein is F-BAR domain only protein 2 (Fcho2).